The primary structure comprises 177 residues: RNA silencing suppressor (177 aa).

As to quaternary structure, homooctamer. The eight monomers assemble into a closed ring that binds RNA.

It localises to the host cytoplasm. Functionally, acts as a suppressor of RNA-mediated gene silencing, also known as post-transcriptional gene silencing (PTGS), a mechanism of plant viral defense that limits the accumulation of viral RNAs. Binds to ssRNAs and dsRNAs in vitro. Also functions as a replication enhancer. The protein is RNA silencing suppressor of Beta vulgaris (Sugar beet).